Consider the following 246-residue polypeptide: Ribosome maturation factor RimM (246 aa).

The segment covering 1–15 (MKRKQESKGAGEKRQ) has biased composition (basic and acidic residues). A disordered region spans residues 1 to 63 (MKRKQESKGA…NPQFTTPNPD (63 aa)). The span at 45 to 54 (VPSPQSPIPN) shows a compositional bias: pro residues. Residues 158–239 (GEDEYHVVDL…RIEITPPPGL (82 aa)) form the PRC barrel domain.

This sequence belongs to the RimM family. As to quaternary structure, binds ribosomal protein uS19.

The protein resides in the cytoplasm. Functionally, an accessory protein needed during the final step in the assembly of 30S ribosomal subunit, possibly for assembly of the head region. Essential for efficient processing of 16S rRNA. May be needed both before and after RbfA during the maturation of 16S rRNA. It has affinity for free ribosomal 30S subunits but not for 70S ribosomes. This is Ribosome maturation factor RimM from Nostoc sp. (strain PCC 7120 / SAG 25.82 / UTEX 2576).